A 183-amino-acid polypeptide reads, in one-letter code: Inner membrane protein p54 (183 aa).

The chain crosses the membrane as a helical span at residues 32-52; sequence YTILIAIVVLVIIIIVLIYLF. The disordered stretch occupies residues 81–157; that stretch reads EVTPQPGTSK…PYTTVTTQNT (77 aa). Residues 111–122 are compositionally biased toward polar residues; that stretch reads RPATNKPVTDNP. Positions 130-143 are enriched in low complexity; that stretch reads ATGGPAAAPAAASA. An interaction with host DYNLL1 region spans residues 149-161; the sequence is YTTVTTQNTASQT.

This sequence belongs to the asfivirus envelope protein p54 family. In terms of assembly, interacts with the host light chain cytoplasmic dynein DYNLL1; this interaction is critical for intracellular microtubule-dependent virus transport toward viral factories.

It is found in the virion membrane. It localises to the host cytoplasm. The protein resides in the host cytoskeleton. Its subcellular location is the host endoplasmic reticulum membrane. In terms of biological role, inner envelope protein involved, through its interaction with host dynein, in the intracellular microtubule-dependent transport of viral capsid toward viral factories. Seems to induce caspase-3 activation and apoptosis. Plays a role in virion morphogenesis by recruiting and transforming the host ER membranes into the precursors of the viral envelope. Involved in virus attachment to the host cell. The protein is Inner membrane protein p54 of African swine fever virus (strain Badajoz 1971 Vero-adapted) (Ba71V).